Here is a 661-residue protein sequence, read N- to C-terminus: Pentatricopeptide repeat-containing protein At5g66631 (661 aa).

PPR repeat units lie at residues 139 to 173, 176 to 210, 211 to 245, 246 to 280, 410 to 444, 445 to 475, 484 to 518, 519 to 553, and 554 to 588; these read VHFS…GEEK, CTES…GGIP, NSRT…RITR, TLKH…GKFP, DAYT…GIKL, PFST…DRTL, LMLL…GVSP, DIQT…GLEP, and DPYM…NLMP.

The protein belongs to the PPR family. P subfamily.

The protein is Pentatricopeptide repeat-containing protein At5g66631 of Arabidopsis thaliana (Mouse-ear cress).